A 463-amino-acid chain; its full sequence is MSTGTVVQVIGAVVDVEFPQDAVPQVYDALKITGEGSCNGLVLEVQQQLGGGVVRTIAMGTSDGLRRGLEVVNSGSPISVPVGTATLGRIMNVLGDPIDEAGAIGEEERYVIHRSAPSYEEQSNTTELLETGIKVIDLVCPFAKGGKVGLFGGAGVGKTVNMMELINNIAKAHSGLSVFAGVGERTREGNDFYYEMKDSGVLDKVAMVYGQMNEPPGNRLRVALTGLTMAEKFRDEGRDVLLFVDNIYRYTLAGTEVSALLGRMPSAVGYQPTLAEEMGVLQERITSTKTGSITSVQAVYVPADDLTDPSPATTFAHLDATVVLSRQIASLGIYPAVDPLDSTSRQLDPLVVGQEHYDVANGVQTVLQRYKELKDIIAILGMDELSDEDKMTVSRARKIERFLSQPFHVAEVFTGSPGKYVSLKDTIRGFKGILSGEFDHIPEQAFYMVGSIDEAVEKANKKK.

152-159 (GGAGVGKT) contributes to the ATP binding site.

The protein belongs to the ATPase alpha/beta chains family. F-type ATPases have 2 components, CF(1) - the catalytic core - and CF(0) - the membrane proton channel. CF(1) has five subunits: alpha(3), beta(3), gamma(1), delta(1), epsilon(1). CF(0) has three main subunits: a(1), b(2) and c(9-12). The alpha and beta chains form an alternating ring which encloses part of the gamma chain. CF(1) is attached to CF(0) by a central stalk formed by the gamma and epsilon chains, while a peripheral stalk is formed by the delta and b chains.

It is found in the cell inner membrane. It carries out the reaction ATP + H2O + 4 H(+)(in) = ADP + phosphate + 5 H(+)(out). Produces ATP from ADP in the presence of a proton gradient across the membrane. The catalytic sites are hosted primarily by the beta subunits. The sequence is that of ATP synthase subunit beta from Shewanella sp. (strain ANA-3).